The chain runs to 201 residues: Peptidyl-tRNA hydrolase (201 aa).

Y15 is a tRNA binding site. H20 acts as the Proton acceptor in catalysis. Positions 66, 68, and 114 each coordinate tRNA.

The protein belongs to the PTH family. As to quaternary structure, monomer.

Its subcellular location is the cytoplasm. It catalyses the reaction an N-acyl-L-alpha-aminoacyl-tRNA + H2O = an N-acyl-L-amino acid + a tRNA + H(+). Hydrolyzes ribosome-free peptidyl-tRNAs (with 1 or more amino acids incorporated), which drop off the ribosome during protein synthesis, or as a result of ribosome stalling. Its function is as follows. Catalyzes the release of premature peptidyl moieties from peptidyl-tRNA molecules trapped in stalled 50S ribosomal subunits, and thus maintains levels of free tRNAs and 50S ribosomes. In Burkholderia pseudomallei (strain K96243), this protein is Peptidyl-tRNA hydrolase.